The chain runs to 132 residues: MGVSDPVADMLTKIRNAARAGHEKVDVPSSKLKVEVVKILKTEGYIRNFRKVEEDGSGCIRVFLKYDDNETSVIHGIERISTPGRRVYSGYKTLRRVYNGYGTLIVSTSLGVTTGRHAREQRVGGELICKVW.

The protein belongs to the universal ribosomal protein uS8 family. As to quaternary structure, part of the 30S ribosomal subunit. Contacts proteins S5 and S12.

Its function is as follows. One of the primary rRNA binding proteins, it binds directly to 16S rRNA central domain where it helps coordinate assembly of the platform of the 30S subunit. In Treponema pallidum (strain Nichols), this protein is Small ribosomal subunit protein uS8.